The chain runs to 366 residues: UDP-N-acetylglucosamine--N-acetylmuramyl-(pentapeptide) pyrophosphoryl-undecaprenol N-acetylglucosamine transferase (366 aa).

Residues 14–16 (TGG), N125, R168, S196, and Q297 contribute to the UDP-N-acetyl-alpha-D-glucosamine site.

Belongs to the glycosyltransferase 28 family. MurG subfamily.

It localises to the cell inner membrane. The enzyme catalyses di-trans,octa-cis-undecaprenyl diphospho-N-acetyl-alpha-D-muramoyl-L-alanyl-D-glutamyl-meso-2,6-diaminopimeloyl-D-alanyl-D-alanine + UDP-N-acetyl-alpha-D-glucosamine = di-trans,octa-cis-undecaprenyl diphospho-[N-acetyl-alpha-D-glucosaminyl-(1-&gt;4)]-N-acetyl-alpha-D-muramoyl-L-alanyl-D-glutamyl-meso-2,6-diaminopimeloyl-D-alanyl-D-alanine + UDP + H(+). The protein operates within cell wall biogenesis; peptidoglycan biosynthesis. Functionally, cell wall formation. Catalyzes the transfer of a GlcNAc subunit on undecaprenyl-pyrophosphoryl-MurNAc-pentapeptide (lipid intermediate I) to form undecaprenyl-pyrophosphoryl-MurNAc-(pentapeptide)GlcNAc (lipid intermediate II). This is UDP-N-acetylglucosamine--N-acetylmuramyl-(pentapeptide) pyrophosphoryl-undecaprenol N-acetylglucosamine transferase from Rhodopseudomonas palustris (strain BisB5).